The primary structure comprises 240 residues: Small ribosomal subunit protein uS3 (240 aa).

Positions 39–108 (LRKFLKKKLY…ELILNIKEER (70 aa)) constitute a KH type-2 domain. Residues 213–224 (MNSDDTATPERK) are compositionally biased toward basic and acidic residues. Residues 213–240 (MNSDDTATPERKAPRRRKGRRNVNAKKN) are disordered. A compositionally biased stretch (basic residues) spans 225-240 (APRRRKGRRNVNAKKN).

This sequence belongs to the universal ribosomal protein uS3 family. As to quaternary structure, part of the 30S ribosomal subunit. Forms a tight complex with proteins S10 and S14.

Functionally, binds the lower part of the 30S subunit head. Binds mRNA in the 70S ribosome, positioning it for translation. The sequence is that of Small ribosomal subunit protein uS3 from Nautilia profundicola (strain ATCC BAA-1463 / DSM 18972 / AmH).